The primary structure comprises 43 residues: Peroxidase (43 aa).

The protein belongs to the peroxidase family. Classical plant (class III) peroxidase subfamily. Ca(2+) is required as a cofactor. It depends on heme b as a cofactor.

It carries out the reaction 2 a phenolic donor + H2O2 = 2 a phenolic radical donor + 2 H2O. Functionally, removal of H(2)O(2), oxidation of toxic reductants, biosynthesis and degradation of lignin, suberization, auxin catabolism, response to environmental stresses such as wounding, pathogen attack and oxidative stress. These functions might be dependent on each isozyme/isoform in each plant tissue. The chain is Peroxidase from Cynara cardunculus var. scolymus (Globe artichoke).